Reading from the N-terminus, the 195-residue chain is Imidazoleglycerol-phosphate dehydratase (195 aa).

This sequence belongs to the imidazoleglycerol-phosphate dehydratase family.

It is found in the cytoplasm. The enzyme catalyses D-erythro-1-(imidazol-4-yl)glycerol 3-phosphate = 3-(imidazol-4-yl)-2-oxopropyl phosphate + H2O. It functions in the pathway amino-acid biosynthesis; L-histidine biosynthesis; L-histidine from 5-phospho-alpha-D-ribose 1-diphosphate: step 6/9. This chain is Imidazoleglycerol-phosphate dehydratase, found in Aminomonas aminovorus.